A 608-amino-acid polypeptide reads, in one-letter code: Elongation factor 4 (608 aa).

A tr-type G domain is found at serine 11–aspartate 193. GTP contacts are provided by residues aspartate 23–threonine 28 and asparagine 140–aspartate 143.

The protein belongs to the TRAFAC class translation factor GTPase superfamily. Classic translation factor GTPase family. LepA subfamily.

The protein localises to the cell membrane. The enzyme catalyses GTP + H2O = GDP + phosphate + H(+). Functionally, required for accurate and efficient protein synthesis under certain stress conditions. May act as a fidelity factor of the translation reaction, by catalyzing a one-codon backward translocation of tRNAs on improperly translocated ribosomes. Back-translocation proceeds from a post-translocation (POST) complex to a pre-translocation (PRE) complex, thus giving elongation factor G a second chance to translocate the tRNAs correctly. Binds to ribosomes in a GTP-dependent manner. This is Elongation factor 4 from Bacillus cytotoxicus (strain DSM 22905 / CIP 110041 / 391-98 / NVH 391-98).